Reading from the N-terminus, the 374-residue chain is Queuine tRNA-ribosyltransferase (374 aa).

Aspartate 91 acts as the Proton acceptor in catalysis. Substrate-binding positions include 91-95 (DSGGY), aspartate 145, glutamine 189, and glycine 216. Positions 247 to 253 (GVGTVPD) are RNA binding. Catalysis depends on aspartate 266, which acts as the Nucleophile. Positions 271-275 (TRNAR) are RNA binding; important for wobble base 34 recognition. Zn(2+)-binding residues include cysteine 304, cysteine 306, cysteine 309, and histidine 335.

Belongs to the queuine tRNA-ribosyltransferase family. As to quaternary structure, homodimer. Within each dimer, one monomer is responsible for RNA recognition and catalysis, while the other monomer binds to the replacement base PreQ1. It depends on Zn(2+) as a cofactor.

The enzyme catalyses 7-aminomethyl-7-carbaguanine + guanosine(34) in tRNA = 7-aminomethyl-7-carbaguanosine(34) in tRNA + guanine. The protein operates within tRNA modification; tRNA-queuosine biosynthesis. Its function is as follows. Catalyzes the base-exchange of a guanine (G) residue with the queuine precursor 7-aminomethyl-7-deazaguanine (PreQ1) at position 34 (anticodon wobble position) in tRNAs with GU(N) anticodons (tRNA-Asp, -Asn, -His and -Tyr). Catalysis occurs through a double-displacement mechanism. The nucleophile active site attacks the C1' of nucleotide 34 to detach the guanine base from the RNA, forming a covalent enzyme-RNA intermediate. The proton acceptor active site deprotonates the incoming PreQ1, allowing a nucleophilic attack on the C1' of the ribose to form the product. After dissociation, two additional enzymatic reactions on the tRNA convert PreQ1 to queuine (Q), resulting in the hypermodified nucleoside queuosine (7-(((4,5-cis-dihydroxy-2-cyclopenten-1-yl)amino)methyl)-7-deazaguanosine). The protein is Queuine tRNA-ribosyltransferase of Leptospira borgpetersenii serovar Hardjo-bovis (strain JB197).